The primary structure comprises 47 residues: Type II secretion system protein N (47 aa).

This sequence belongs to the GSP N family.

The protein localises to the cell inner membrane. Its function is as follows. Involved in a type II secretion system (T2SS, formerly general secretion pathway, GSP) for the export of proteins. This is Type II secretion system protein N (exeN) from Aeromonas salmonicida.